Here is a 386-residue protein sequence, read N- to C-terminus: DNase toxin Tse7 (386 aa).

In terms of assembly, interacts with Tsi7.

The enzyme catalyses Endonucleolytic cleavage to 5'-phosphodinucleotide and 5'-phosphooligonucleotide end-products.. Its function is as follows. Type VI secretion exported toxin that via to its DNase activity induces growth arrest and ultimately DNA degradation within target cell. The activity is initially neutralized by a cognate immunity protein Tsi7. The chain is DNase toxin Tse7 from Pseudomonas aeruginosa (strain ATCC 15692 / DSM 22644 / CIP 104116 / JCM 14847 / LMG 12228 / 1C / PRS 101 / PAO1).